A 262-amino-acid chain; its full sequence is Deaminated glutathione amidase (262 aa).

One can recognise a CN hydrolase domain in the interval 1-238 (MLVAAGQFAV…PALIMAEVTP (238 aa)). Residue Glu40 is the Proton acceptor of the active site. The active-site Proton donor is the Lys110. Residue Cys147 is the Nucleophile of the active site.

Belongs to the carbon-nitrogen hydrolase superfamily. NIT1/NIT2 family.

It carries out the reaction N-(4-oxoglutaryl)-L-cysteinylglycine + H2O = L-cysteinylglycine + 2-oxoglutarate. In terms of biological role, hydrolyzes deaminated glutathione (dGSH) to 2-oxoglutarate and L-cysteinylglycine, and no activity on glutathione or L-glutamine. May function as a metabolite repair enzyme. This chain is Deaminated glutathione amidase (ybeM), found in Escherichia coli O157:H7.